Consider the following 404-residue polypeptide: Type II restriction enzyme EcoRII (404 aa).

Y308 is a catalytic residue.

Homodimer. The cofactor is Mg(2+).

The catalysed reaction is Endonucleolytic cleavage of DNA to give specific double-stranded fragments with terminal 5'-phosphates.. Functionally, an E and P subtype restriction enzyme that recognizes the double-stranded sequence 5'-CCWGG-3' and cleaves before C-1. The chain is Type II restriction enzyme EcoRII (ecoRIIR) from Escherichia coli.